We begin with the raw amino-acid sequence, 226 residues long: Cobalt transport protein CbiM 2 (226 aa).

6 helical membrane-spanning segments follow: residues 6–26 (GFLP…VVAY), 43–63 (MLLG…MPSV), 75–95 (LGAI…VLLF), 107–127 (TLGA…AAVF), 135–155 (FPFG…TYVT), and 181–201 (VFAL…VVVM).

It belongs to the CbiM family. As to quaternary structure, forms an energy-coupling factor (ECF) transporter complex composed of an ATP-binding protein (A component, CbiO), a transmembrane protein (T component, CbiQ) and 2 possible substrate-capture proteins (S components, CbiM and CbiN) of unknown stoichimetry.

The protein localises to the cell inner membrane. It participates in cofactor biosynthesis; adenosylcobalamin biosynthesis. In terms of biological role, part of the energy-coupling factor (ECF) transporter complex CbiMNOQ involved in cobalt import. This Pelobacter propionicus (strain DSM 2379 / NBRC 103807 / OttBd1) protein is Cobalt transport protein CbiM 2.